A 278-amino-acid polypeptide reads, in one-letter code: Shikimate dehydrogenase (NADP(+)) (278 aa).

Shikimate is bound by residues 19 to 21 (SLS) and Thr66. The active-site Proton acceptor is the Lys70. Asp82 lines the NADP(+) pocket. 2 residues coordinate shikimate: Asn91 and Asp107. Residues 133 to 137 (GSGGA), 157 to 162 (NRTRAR), and Ile222 each bind NADP(+). Tyr224 lines the shikimate pocket. An NADP(+)-binding site is contributed by Gly245.

This sequence belongs to the shikimate dehydrogenase family. Homodimer.

It carries out the reaction shikimate + NADP(+) = 3-dehydroshikimate + NADPH + H(+). The protein operates within metabolic intermediate biosynthesis; chorismate biosynthesis; chorismate from D-erythrose 4-phosphate and phosphoenolpyruvate: step 4/7. Involved in the biosynthesis of the chorismate, which leads to the biosynthesis of aromatic amino acids. Catalyzes the reversible NADPH linked reduction of 3-dehydroshikimate (DHSA) to yield shikimate (SA). The polypeptide is Shikimate dehydrogenase (NADP(+)) (Jannaschia sp. (strain CCS1)).